Reading from the N-terminus, the 380-residue chain is Protein FAM110B (380 aa).

Positions 92–272 (ALGSPTLKGF…RPSLQRSKSD (181 aa)) are disordered. Residues 100–110 (GFGGGGGGAKS) show a composition bias toward gly residues. Residues 127 to 138 (ILNSSEGSSTGS) are compositionally biased toward polar residues. Positions 153–162 (DAAELHRHSF) are enriched in basic and acidic residues. The span at 239-248 (KVAAPAAVKS) shows a compositional bias: low complexity. Phosphoserine occurs at positions 248 and 311. Residues 327 to 347 (DCEQSQDSNSDLRNDDSANDR) are disordered. The span at 336–345 (SDLRNDDSAN) shows a compositional bias: basic and acidic residues.

It belongs to the FAM110 family.

The protein localises to the cytoplasm. It is found in the cytoskeleton. It localises to the microtubule organizing center. Its subcellular location is the centrosome. The polypeptide is Protein FAM110B (FAM110B) (Bos taurus (Bovine)).